A 200-amino-acid polypeptide reads, in one-letter code: Large ribosomal subunit protein uL4 (200 aa).

Residues 38-65 (GRQGSKAQKTRSEVSGGGKKPWRQKGTG) form a disordered region.

Belongs to the universal ribosomal protein uL4 family. In terms of assembly, part of the 50S ribosomal subunit.

One of the primary rRNA binding proteins, this protein initially binds near the 5'-end of the 23S rRNA. It is important during the early stages of 50S assembly. It makes multiple contacts with different domains of the 23S rRNA in the assembled 50S subunit and ribosome. Its function is as follows. Forms part of the polypeptide exit tunnel. The sequence is that of Large ribosomal subunit protein uL4 from Pseudomonas aeruginosa (strain LESB58).